Reading from the N-terminus, the 264-residue chain is S-adenosylmethionine decarboxylase proenzyme (264 aa).

The Schiff-base intermediate with substrate; via pyruvic acid role is filled by Ser-112. Ser-112 is modified (pyruvic acid (Ser); by autocatalysis). His-117 functions as the Proton acceptor; for processing activity in the catalytic mechanism. Cys-140 (proton donor; for catalytic activity) is an active-site residue.

Belongs to the prokaryotic AdoMetDC family. Type 2 subfamily. Heterooctamer of four alpha and four beta chains arranged as a tetramer of alpha/beta heterodimers. Pyruvate is required as a cofactor. Post-translationally, is synthesized initially as an inactive proenzyme. Formation of the active enzyme involves a self-maturation process in which the active site pyruvoyl group is generated from an internal serine residue via an autocatalytic post-translational modification. Two non-identical subunits are generated from the proenzyme in this reaction, and the pyruvate is formed at the N-terminus of the alpha chain, which is derived from the carboxyl end of the proenzyme. The post-translation cleavage follows an unusual pathway, termed non-hydrolytic serinolysis, in which the side chain hydroxyl group of the serine supplies its oxygen atom to form the C-terminus of the beta chain, while the remainder of the serine residue undergoes an oxidative deamination to produce ammonia and the pyruvoyl group blocking the N-terminus of the alpha chain.

The enzyme catalyses S-adenosyl-L-methionine + H(+) = S-adenosyl 3-(methylsulfanyl)propylamine + CO2. It functions in the pathway amine and polyamine biosynthesis; S-adenosylmethioninamine biosynthesis; S-adenosylmethioninamine from S-adenosyl-L-methionine: step 1/1. In terms of biological role, catalyzes the decarboxylation of S-adenosylmethionine to S-adenosylmethioninamine (dcAdoMet), the propylamine donor required for the synthesis of the polyamines spermine and spermidine from the diamine putrescine. The polypeptide is S-adenosylmethionine decarboxylase proenzyme (Klebsiella pneumoniae (strain 342)).